A 328-amino-acid polypeptide reads, in one-letter code: Phosphate acyltransferase (328 aa).

The protein belongs to the PlsX family. Homodimer. Probably interacts with PlsY.

Its subcellular location is the cytoplasm. It catalyses the reaction a fatty acyl-[ACP] + phosphate = an acyl phosphate + holo-[ACP]. It functions in the pathway lipid metabolism; phospholipid metabolism. Catalyzes the reversible formation of acyl-phosphate (acyl-PO(4)) from acyl-[acyl-carrier-protein] (acyl-ACP). This enzyme utilizes acyl-ACP as fatty acyl donor, but not acyl-CoA. In Pseudothermotoga lettingae (strain ATCC BAA-301 / DSM 14385 / NBRC 107922 / TMO) (Thermotoga lettingae), this protein is Phosphate acyltransferase.